The following is a 174-amino-acid chain: Gamma-crystallin D (174 aa).

Beta/gamma crystallin 'Greek key' domains follow at residues 2–40 (GKIT…RVDS) and 41–83 (GCWM…RLIP). A connecting peptide region spans residues 84-87 (HAGS). 2 Beta/gamma crystallin 'Greek key' domains span residues 88 to 128 (HRLR…NVLE) and 129 to 171 (GSWV…RRVI).

Belongs to the beta/gamma-crystallin family.

In terms of biological role, crystallins are the dominant structural components of the vertebrate eye lens. The chain is Gamma-crystallin D (CRYGD) from Bos taurus (Bovine).